A 264-amino-acid polypeptide reads, in one-letter code: MFLEKIVQVRREKVRQAKNKIPFWEMRKMAEEQVSHRLPLSLRQALLRENAKGKVGVIAEIKKASPSKGVLREQLDPEEVAQVYAKSGAAAISVLTEEDYFLGSPEYLKAVRAVVSLPILRKDFILDPYQIYEAKVLGADAVLLITSLLASVELKEMIKITEGLGMEALVEAHSLEEVEKALTAGARLIGINNRDLRTFATNIDVSLKLAPVLKEAGVVMVSESGIRSKEDIKALMTAGYHGILIGEALVRAPDPGKALEVLLA.

Belongs to the TrpC family.

The catalysed reaction is 1-(2-carboxyphenylamino)-1-deoxy-D-ribulose 5-phosphate + H(+) = (1S,2R)-1-C-(indol-3-yl)glycerol 3-phosphate + CO2 + H2O. Its pathway is amino-acid biosynthesis; L-tryptophan biosynthesis; L-tryptophan from chorismate: step 4/5. The protein is Indole-3-glycerol phosphate synthase of Carboxydothermus hydrogenoformans (strain ATCC BAA-161 / DSM 6008 / Z-2901).